Reading from the N-terminus, the 358-residue chain is Trace amine-associated receptor 7f (358 aa).

Over 1 to 47 (MSIADETVSWNQDSILSRDLFSATSAELCYENLNRSCVRSPYSPGPR) the chain is Extracellular. Residue asparagine 34 is glycosylated (N-linked (GlcNAc...) asparagine). 2 disulfides stabilise this stretch: cysteine 37/cysteine 201 and cysteine 120/cysteine 205. A helical transmembrane segment spans residues 48 to 68 (LILYAVFGFGAVLAVCGNLLV). The Cytoplasmic portion of the chain corresponds to 69 to 83 (MTSILHFRQLHSPAN). Residues 84 to 104 (FLVASLACADFLVGVMVMPFS) traverse the membrane as a helical segment. Residues 105-121 (MVRSVEGCWYFGDSYCK) lie on the Extracellular side of the membrane. Residues 122–143 (LHTCFDVSFCYCSLFHLCFISV) form a helical membrane-spanning segment. Over 144–166 (DRYIAVSDPLAYPTRFTASVSGK) the chain is Cytoplasmic. The helical transmembrane segment at 167 to 187 (CITFSWLLSISYGFSLIYTGA) threads the bilayer. The Extracellular portion of the chain corresponds to 188–212 (SEAGLEDLVSSLTCVGGCQIAVNQT). Residue asparagine 210 is glycosylated (N-linked (GlcNAc...) asparagine). Residues 213 to 233 (WVFINFSVFLIPTLVMITVYS) form a helical membrane-spanning segment. The Cytoplasmic segment spans residues 234 to 274 (KIFLIAKQQAQNIEKMSKQTARASDSYKDRVAKRERKAAKT). A helical transmembrane segment spans residues 275-295 (LGIAVAAFLLSWLPYFIDSFI). Over 296-309 (DAFLGFITPTYVYE) the chain is Extracellular. Residues 310–333 (ILVWIVYYNSAMNPLIYAFFYPWF) traverse the membrane as a helical segment. Residues 334 to 358 (RKAIKLTVTGKILRENSSTTNLFSE) lie on the Cytoplasmic side of the membrane.

This sequence belongs to the G-protein coupled receptor 1 family. As to expression, specifically expressed in neurons of the olfactory epithelium.

The protein resides in the cell membrane. Olfactory receptor activated by trace amines, such as N-methylpiperidine and N,N-dimethylcyclohexylamine. Trace amine compounds are enriched in animal body fluids and act on trace amine-associated receptors (TAARs) to elicit both intraspecific and interspecific innate behaviors. Ligand-binding causes a conformation change that triggers signaling via G(s)-class of G alpha proteins (GNAL or GNAS). The sequence is that of Trace amine-associated receptor 7f from Mus musculus (Mouse).